The following is a 430-amino-acid chain: Lipoyl synthase, mitochondrial (430 aa).

Residues 1–29 (MASPVPIQRLQAPLRRSLARAAALSTRSY) constitute a mitochondrion transit peptide. The span at 28 to 58 (SYATIPSGPSSQPTSQESSSAASASAPATKP) shows a compositional bias: low complexity. Residues 28–62 (SYATIPSGPSSQPTSQESSSAASASAPATKPRPTY) form a disordered region. Residues Cys142, Cys147, Cys153, Cys173, Cys177, Cys180, and Ser390 each contribute to the [4Fe-4S] cluster site. Residues 156-379 (GSNKAAATAT…RQRALDMGFL (224 aa)) enclose the Radical SAM core domain.

This sequence belongs to the radical SAM superfamily. Lipoyl synthase family. [4Fe-4S] cluster is required as a cofactor.

The protein resides in the mitochondrion. The enzyme catalyses [[Fe-S] cluster scaffold protein carrying a second [4Fe-4S](2+) cluster] + N(6)-octanoyl-L-lysyl-[protein] + 2 oxidized [2Fe-2S]-[ferredoxin] + 2 S-adenosyl-L-methionine + 4 H(+) = [[Fe-S] cluster scaffold protein] + N(6)-[(R)-dihydrolipoyl]-L-lysyl-[protein] + 4 Fe(3+) + 2 hydrogen sulfide + 2 5'-deoxyadenosine + 2 L-methionine + 2 reduced [2Fe-2S]-[ferredoxin]. The protein operates within protein modification; protein lipoylation via endogenous pathway; protein N(6)-(lipoyl)lysine from octanoyl-[acyl-carrier-protein]: step 2/2. Catalyzes the radical-mediated insertion of two sulfur atoms into the C-6 and C-8 positions of the octanoyl moiety bound to the lipoyl domains of lipoate-dependent enzymes, thereby converting the octanoylated domains into lipoylated derivatives. In Neurospora crassa (strain ATCC 24698 / 74-OR23-1A / CBS 708.71 / DSM 1257 / FGSC 987), this protein is Lipoyl synthase, mitochondrial.